Here is a 120-residue protein sequence, read N- to C-terminus: Kidney androgen-regulated protein (120 aa).

The first 18 residues, 1–18 (MMICKVLVITVFCVLTVA), serve as a signal peptide directing secretion.

It is found in the secreted. The chain is Kidney androgen-regulated protein (Kap) from Rattus norvegicus (Rat).